Consider the following 369-residue polypeptide: Cytokine receptor common subunit gamma (369 aa).

Residues 1 to 22 (MLKLLLSPRSFLVLQLLLLRAG) form the signal peptide. The Extracellular segment spans residues 23–263 (WSSKVLMSSA…ENPSLFALEA (241 aa)). An intrachain disulfide couples C62 to C72. N-linked (GlcNAc...) asparagine glycans are attached at residues N71, N75, N84, and N96. A disulfide bridge connects residues C102 and C115. Positions 156-254 (APENLTLSNL…VHWGSHTVEE (99 aa)) constitute a Fibronectin type-III domain. N159 and N164 each carry an N-linked (GlcNAc...) asparagine glycan. The short motif at 238–242 (WSKWS) is the WSXWS motif element. A helical transmembrane segment spans residues 264–284 (VLIPVGTMGLIITLIFVYCWL). The Cytoplasmic segment spans residues 285-369 (ERMPPIPPIK…PPCYSLKPEA (85 aa)). Residues 286-294 (RMPPIPPIK) carry the Box 1 motif motif.

This sequence belongs to the type I cytokine receptor family. Type 5 subfamily. As to quaternary structure, the gamma subunit is common to the IL2, IL4, IL7, IL15, IL21 and probably also the IL13 receptors. Interacts with SHB upon interleukin stimulation. Interacts with IL9.

It localises to the cell membrane. Its subcellular location is the cell surface. In terms of biological role, common subunit for the receptors for a variety of interleukins. Probably in association with IL15RA, involved in the stimulation of neutrophil phagocytosis by IL15. The sequence is that of Cytokine receptor common subunit gamma (Il2rg) from Mus musculus (Mouse).